The primary structure comprises 146 residues: Metallothiol transferase FosB (146 aa).

One can recognise a VOC domain in the interval 4–120 (GINHMTFSVS…DGHLLEVHTG (117 aa)). Residues histidine 7, histidine 66, and glutamate 116 each contribute to the Mg(2+) site. Residue glutamate 116 is the Proton donor/acceptor of the active site.

The protein belongs to the fosfomycin resistance protein family. FosB subfamily. As to quaternary structure, homodimer. The cofactor is Mg(2+).

It localises to the cytoplasm. Its function is as follows. Metallothiol transferase which confers resistance to fosfomycin by catalyzing the addition of a thiol cofactor to fosfomycin. L-cysteine is probably the physiological thiol donor. The protein is Metallothiol transferase FosB of Shouchella clausii (strain KSM-K16) (Alkalihalobacillus clausii).